The following is a 537-amino-acid chain: CTP synthase (537 aa).

The tract at residues 1–268 (MNTKYIFVTG…DNLVCKKLKL (268 aa)) is amidoligase domain. Ser14 contacts CTP. Ser14 contacts UTP. 15–20 (SLGKGI) contributes to the ATP binding site. L-glutamine is bound at residue Tyr55. An ATP-binding site is contributed by Asp72. Mg(2+)-binding residues include Asp72 and Glu142. CTP is bound by residues 149 to 151 (DIE), 189 to 194 (KTKPTQ), and Lys225. UTP contacts are provided by residues 189–194 (KTKPTQ) and Lys225. Residues 293–535 (NIALVGKYVE…IKASLNSKHK (243 aa)) form the Glutamine amidotransferase type-1 domain. Gly355 lines the L-glutamine pocket. The active-site Nucleophile; for glutamine hydrolysis is Cys382. Residues 383–386 (LGMQ), Glu406, and Arg463 contribute to the L-glutamine site. Catalysis depends on residues His508 and Glu510.

It belongs to the CTP synthase family. Homotetramer.

The enzyme catalyses UTP + L-glutamine + ATP + H2O = CTP + L-glutamate + ADP + phosphate + 2 H(+). It carries out the reaction L-glutamine + H2O = L-glutamate + NH4(+). The catalysed reaction is UTP + NH4(+) + ATP = CTP + ADP + phosphate + 2 H(+). Its pathway is pyrimidine metabolism; CTP biosynthesis via de novo pathway; CTP from UDP: step 2/2. Allosterically activated by GTP, when glutamine is the substrate; GTP has no effect on the reaction when ammonia is the substrate. The allosteric effector GTP functions by stabilizing the protein conformation that binds the tetrahedral intermediate(s) formed during glutamine hydrolysis. Inhibited by the product CTP, via allosteric rather than competitive inhibition. Its function is as follows. Catalyzes the ATP-dependent amination of UTP to CTP with either L-glutamine or ammonia as the source of nitrogen. Regulates intracellular CTP levels through interactions with the four ribonucleotide triphosphates. In Clostridium kluyveri (strain ATCC 8527 / DSM 555 / NBRC 12016 / NCIMB 10680 / K1), this protein is CTP synthase.